The chain runs to 94 residues: MSDFDSNLDLAGTGASPAEAAELQRMLAVEQQKAQFTAQVHNFMDVCWDKCIDRPGNKLDSRTESCLVSCVDRFIDTTLSITNRFAQIVQKGAH.

The Twin CX3C motif signature appears at Cys47–Cys70. Intrachain disulfides connect Cys47–Cys70 and Cys51–Cys66.

This sequence belongs to the small Tim family. In terms of assembly, heterohexamer; composed of 3 copies of TIMM8A and 3 copies of TIMM13, named soluble 70 kDa complex. Associates with the TIM22 complex, whose core is composed of TIMM22.

The protein resides in the mitochondrion inner membrane. Its function is as follows. Mitochondrial intermembrane chaperone that participates in the import and insertion of some multi-pass transmembrane proteins into the mitochondrial inner membrane. Also required for the transfer of beta-barrel precursors from the TOM complex to the sorting and assembly machinery (SAM complex) of the outer membrane. Acts as a chaperone-like protein that protects the hydrophobic precursors from aggregation and guide them through the mitochondrial intermembrane space. The TIMM8-TIMM13 complex mediates the import of some proteins while the predominant TIMM9-TIMM10 70 kDa complex mediates the import of much more proteins. The protein is Mitochondrial import inner membrane translocase subunit Tim8 A (timm8a) of Xenopus laevis (African clawed frog).